A 432-amino-acid chain; its full sequence is Glutamyl-tRNA reductase (432 aa).

Substrate contacts are provided by residues 50–53 (TCNR), S110, 115–117 (ETQ), and Q121. C51 (nucleophile) is an active-site residue. 190–195 (GAGEMG) contacts NADP(+).

Belongs to the glutamyl-tRNA reductase family. In terms of assembly, homodimer.

The enzyme catalyses (S)-4-amino-5-oxopentanoate + tRNA(Glu) + NADP(+) = L-glutamyl-tRNA(Glu) + NADPH + H(+). It participates in porphyrin-containing compound metabolism; protoporphyrin-IX biosynthesis; 5-aminolevulinate from L-glutamyl-tRNA(Glu): step 1/2. In terms of biological role, catalyzes the NADPH-dependent reduction of glutamyl-tRNA(Glu) to glutamate 1-semialdehyde (GSA). In Nitratiruptor sp. (strain SB155-2), this protein is Glutamyl-tRNA reductase.